A 372-amino-acid polypeptide reads, in one-letter code: Ribosomal RNA small subunit methyltransferase H (372 aa).

S-adenosyl-L-methionine-binding positions include 44-46 (GGH), Asp-63, Leu-97, Asp-111, and Gln-118. A compositionally biased stretch (basic and acidic residues) spans 315–334 (RAAERLDPTAEQRRRTDRER). Positions 315-372 (RAAERLDPTAEQRRRTDRERYRRRVRAMHQPGTGSAVRRPTPGDDGTGTDEEGEGHDS) are disordered. Over residues 361-372 (TGTDEEGEGHDS) the composition is skewed to acidic residues.

It belongs to the methyltransferase superfamily. RsmH family.

Its subcellular location is the cytoplasm. It carries out the reaction cytidine(1402) in 16S rRNA + S-adenosyl-L-methionine = N(4)-methylcytidine(1402) in 16S rRNA + S-adenosyl-L-homocysteine + H(+). Specifically methylates the N4 position of cytidine in position 1402 (C1402) of 16S rRNA. This chain is Ribosomal RNA small subunit methyltransferase H, found in Salinispora arenicola (strain CNS-205).